The primary structure comprises 151 residues: Small ribosomal subunit protein uS13m (151 aa).

This sequence belongs to the universal ribosomal protein uS13 family. As to quaternary structure, component of the mitochondrial small ribosomal subunit (mt-SSU). Mature yeast 74S mitochondrial ribosomes consist of a small (37S) and a large (54S) subunit. The 37S small subunit contains a 15S ribosomal RNA (15S mt-rRNA) and at least 32 different proteins. The 54S large subunit contains a 21S rRNA (21S mt-rRNA) and at least 45 different proteins.

Its subcellular location is the mitochondrion. Component of the mitochondrial ribosome (mitoribosome), a dedicated translation machinery responsible for the synthesis of mitochondrial genome-encoded proteins, including at least some of the essential transmembrane subunits of the mitochondrial respiratory chain. The mitoribosomes are attached to the mitochondrial inner membrane and translation products are cotranslationally integrated into the membrane. This chain is Small ribosomal subunit protein uS13m (sws2), found in Schizosaccharomyces pombe (strain 972 / ATCC 24843) (Fission yeast).